A 359-amino-acid polypeptide reads, in one-letter code: Molybdenum import ATP-binding protein ModC (359 aa).

Residues Met-1–Glu-229 enclose the ABC transporter domain. An ATP-binding site is contributed by Gly-31–Thr-38. Residues Ser-289–Asn-354 enclose the Mop domain.

Belongs to the ABC transporter superfamily. Molybdate importer (TC 3.A.1.8) family. The complex is composed of two ATP-binding proteins (ModC), two transmembrane proteins (ModB) and a solute-binding protein (ModA).

It is found in the cell inner membrane. The catalysed reaction is molybdate(out) + ATP + H2O = molybdate(in) + ADP + phosphate + H(+). Part of the ABC transporter complex ModABC involved in molybdenum import. Responsible for energy coupling to the transport system. This is Molybdenum import ATP-binding protein ModC from Yersinia pestis bv. Antiqua (strain Antiqua).